Reading from the N-terminus, the 205-residue chain is Outer-membrane lipoprotein LolB (205 aa).

A signal peptide spans 1–17 (MFLRHVIVFSFIALLAG). Cys-18 is lipidated: N-palmitoyl cysteine. Residue Cys-18 is the site of S-diacylglycerol cysteine attachment.

The protein belongs to the LolB family. As to quaternary structure, monomer.

Its subcellular location is the cell outer membrane. Functionally, plays a critical role in the incorporation of lipoproteins in the outer membrane after they are released by the LolA protein. The sequence is that of Outer-membrane lipoprotein LolB from Pseudomonas fluorescens (strain Pf0-1).